Consider the following 249-residue polypeptide: Adenylate kinase (249 aa).

43 to 48 contributes to the ATP binding site; that stretch reads GAGKGT. The tract at residues 63–92 is NMP; sequence ATGDMLRAQVAAKTALGVEAKKIMDQGGLV. AMP contacts are provided by residues threonine 64, arginine 69, 90-92, 119-122, and glutamine 126; these read GLV and GFPR. Residues 160–197 form an LID region; it reads GRLVHPASGRSYHKLFNPPKKNMIDDITGEPLVQRSDD. Residues arginine 161 and 170 to 171 contribute to the ATP site; that span reads SY. Residues arginine 194 and arginine 205 each coordinate AMP. ATP is bound at residue glutamine 233.

This sequence belongs to the adenylate kinase family. AK2 subfamily. Monomer.

It is found in the cytoplasm. Its subcellular location is the cytosol. The protein localises to the mitochondrion intermembrane space. It carries out the reaction AMP + ATP = 2 ADP. In terms of biological role, catalyzes the reversible transfer of the terminal phosphate group between ATP and AMP. Plays an important role in cellular energy homeostasis and in adenine nucleotide metabolism. Adenylate kinase activity is critical for regulation of the phosphate utilization and the AMP de novo biosynthesis pathways. This Scheffersomyces stipitis (strain ATCC 58785 / CBS 6054 / NBRC 10063 / NRRL Y-11545) (Yeast) protein is Adenylate kinase.